Here is a 330-residue protein sequence, read N- to C-terminus: Transcription factor TGA5 (330 aa).

Positions 1–13 (MGDTSPRTSVSTD) are enriched in polar residues. A disordered region spans residues 1-64 (MGDTSPRTSV…REAARKSRLR (64 aa)). The span at 35 to 47 (SSDRSKSKMDQKT) shows a compositional bias: basic and acidic residues. The region spanning 44–107 (DQKTLRRLAQ…SSGDQAHSTA (64 aa)) is the bZIP domain. 2 coiled-coil regions span residues 45-98 (QKTL…FISS) and 211-244 (EQQSLDINNLQQSSQQAEDALSQGMDNLQQSLAD). The tract at residues 46 to 66 (KTLRRLAQNREAARKSRLRKK) is basic motif. The tract at residues 72–86 (LENSRLKLTQLEQEL) is leucine-zipper. A DOG1 domain is found at 111–327 (AMAFDVEYRR…RALSSLWLAR (217 aa)).

It belongs to the bZIP family. Binds DNA as a dimer. Interaction with the Dof domain protein OBP1 enhances the binding to the ocs element. Interacts with NPR1, NPR3 and NPR4. As to expression, predominantly expressed in roots.

Its subcellular location is the nucleus. Its function is as follows. Transcriptional activator that binds specifically to the DNA sequence 5'-TGACG-3'. Recognizes ocs elements like the as-1 motif of the cauliflower mosaic virus 35S promoter. Binding to the as-1-like cis elements mediate auxin- and salicylic acid-inducible transcription. May be involved in the induction of the systemic acquired resistance (SAR) via its interaction with NPR1. Could also bind to the Hex-motif (5'-TGACGTGG-3') another cis-acting element found in plant histone promoters. The protein is Transcription factor TGA5 (TGA5) of Arabidopsis thaliana (Mouse-ear cress).